Reading from the N-terminus, the 165-residue chain is ATP synthase subunit b (165 aa).

A helical transmembrane segment spans residues 5-25; it reads LVGITWEFVFQIVNTFIIFLL.

The protein belongs to the ATPase B chain family. F-type ATPases have 2 components, F(1) - the catalytic core - and F(0) - the membrane proton channel. F(1) has five subunits: alpha(3), beta(3), gamma(1), delta(1), epsilon(1). F(0) has three main subunits: a(1), b(2) and c(10-14). The alpha and beta chains form an alternating ring which encloses part of the gamma chain. F(1) is attached to F(0) by a central stalk formed by the gamma and epsilon chains, while a peripheral stalk is formed by the delta and b chains.

The protein localises to the cell membrane. Its function is as follows. F(1)F(0) ATP synthase produces ATP from ADP in the presence of a proton or sodium gradient. F-type ATPases consist of two structural domains, F(1) containing the extramembraneous catalytic core and F(0) containing the membrane proton channel, linked together by a central stalk and a peripheral stalk. During catalysis, ATP synthesis in the catalytic domain of F(1) is coupled via a rotary mechanism of the central stalk subunits to proton translocation. In terms of biological role, component of the F(0) channel, it forms part of the peripheral stalk, linking F(1) to F(0). In Clostridioides difficile (strain 630) (Peptoclostridium difficile), this protein is ATP synthase subunit b.